The chain runs to 246 residues: 1-(5-phosphoribosyl)-5-[(5-phosphoribosylamino)methylideneamino] imidazole-4-carboxamide isomerase (246 aa).

Residue Asp-8 is the Proton acceptor of the active site. The Proton donor role is filled by Asp-131.

It belongs to the HisA/HisF family.

The protein resides in the cytoplasm. It carries out the reaction 1-(5-phospho-beta-D-ribosyl)-5-[(5-phospho-beta-D-ribosylamino)methylideneamino]imidazole-4-carboxamide = 5-[(5-phospho-1-deoxy-D-ribulos-1-ylimino)methylamino]-1-(5-phospho-beta-D-ribosyl)imidazole-4-carboxamide. The protein operates within amino-acid biosynthesis; L-histidine biosynthesis; L-histidine from 5-phospho-alpha-D-ribose 1-diphosphate: step 4/9. The protein is 1-(5-phosphoribosyl)-5-[(5-phosphoribosylamino)methylideneamino] imidazole-4-carboxamide isomerase of Albidiferax ferrireducens (strain ATCC BAA-621 / DSM 15236 / T118) (Rhodoferax ferrireducens).